The primary structure comprises 277 residues: Shikimate dehydrogenase (NADP(+)) (277 aa).

Shikimate contacts are provided by residues 15-17 (SLS) and Thr62. Lys66 (proton acceptor) is an active-site residue. Asn87 and Asp102 together coordinate shikimate. Residues 127 to 131 (GAGGA), 151 to 156 (NRTVDK), and Ile219 each bind NADP(+). Tyr221 provides a ligand contact to shikimate. Gly242 is a binding site for NADP(+).

This sequence belongs to the shikimate dehydrogenase family. As to quaternary structure, homodimer.

The catalysed reaction is shikimate + NADP(+) = 3-dehydroshikimate + NADPH + H(+). Its pathway is metabolic intermediate biosynthesis; chorismate biosynthesis; chorismate from D-erythrose 4-phosphate and phosphoenolpyruvate: step 4/7. In terms of biological role, involved in the biosynthesis of the chorismate, which leads to the biosynthesis of aromatic amino acids. Catalyzes the reversible NADPH linked reduction of 3-dehydroshikimate (DHSA) to yield shikimate (SA). This chain is Shikimate dehydrogenase (NADP(+)), found in Bacillus cereus (strain 03BB102).